We begin with the raw amino-acid sequence, 443 residues long: Trigger factor (443 aa).

Residues 164-249 enclose the PPIase FKBP-type domain; that stretch reads GDVLCVDFVG…AKSLKKAVDP (86 aa).

It belongs to the FKBP-type PPIase family. Tig subfamily.

It is found in the cytoplasm. The catalysed reaction is [protein]-peptidylproline (omega=180) = [protein]-peptidylproline (omega=0). Functionally, involved in protein export. Acts as a chaperone by maintaining the newly synthesized protein in an open conformation. Functions as a peptidyl-prolyl cis-trans isomerase. This chain is Trigger factor, found in Gluconobacter oxydans (strain 621H) (Gluconobacter suboxydans).